Reading from the N-terminus, the 196-residue chain is Metalloproteinase inhibitor 2 (196 aa).

An N-terminal signal peptide occupies residues 1–2; it reads RA. Cysteine 3 contacts Zn(2+). Involved in metalloproteinase-binding regions lie at residues 3–6 and 71–72; these read CSCS and SA. Cystine bridges form between cysteine 3–cysteine 74, cysteine 5–cysteine 103, cysteine 15–cysteine 128, cysteine 130–cysteine 177, cysteine 135–cysteine 140, and cysteine 148–cysteine 169. The region spanning 3–128 is the NTR domain; the sequence is CSCSPVHPQQ…SLNHRYQMGC (126 aa).

This sequence belongs to the protease inhibitor I35 (TIMP) family. In terms of assembly, interacts (via the C-terminal) with MMP2 (via the C-terminal PEX domain); the interaction inhibits the MMP2 activity. The activity of TIMP2 is dependent on the presence of disulfide bonds.

Its subcellular location is the secreted. Complexes with metalloproteinases (such as collagenases) and irreversibly inactivates them by binding to their catalytic zinc cofactor. The polypeptide is Metalloproteinase inhibitor 2 (TIMP2) (Cricetulus longicaudatus (Long-tailed dwarf hamster)).